We begin with the raw amino-acid sequence, 94 residues long: Small ribosomal subunit protein uS19 (94 aa).

Residues 75–94 are disordered; it reads SHTRTFKGHAGDKKAAGSKR. Residues 83–94 are compositionally biased toward basic and acidic residues; that stretch reads HAGDKKAAGSKR.

It belongs to the universal ribosomal protein uS19 family.

Its function is as follows. Protein S19 forms a complex with S13 that binds strongly to the 16S ribosomal RNA. The protein is Small ribosomal subunit protein uS19 of Nitrosomonas europaea (strain ATCC 19718 / CIP 103999 / KCTC 2705 / NBRC 14298).